Here is a 124-residue protein sequence, read N- to C-terminus: Urocortin (124 aa).

Residues 1–25 form the signal peptide; sequence MRQAGRAALLAALLLLVQLCPGSSQ. The segment at 23–46 is disordered; sequence SSQRSPEAAGVQDPSLRWSPGARN. Positions 26-82 are excised as a propeptide; the sequence is RSPEAAGVQDPSLRWSPGARNQGGGARALLLLLAERFPRRAGPGRLGLGTAGERPRR. Valine amide is present on V122.

This sequence belongs to the sauvagine/corticotropin-releasing factor/urotensin I family. Interacts with CRHR1 and CRHR2 (via their N-terminal extracellular domain). In terms of tissue distribution, keratinocytes in epidermis and the outer and inner root sheaths of hair follicles, epithelium of sebaceous and sweat glands, erector pili muscle, cutaneous blood vessel walls, cutaneous nerves and dermal mononuclear cells. Detected in plasma cells in the lamia propria in colon mucosa (at protein level). Expressed in pituitary and adrenal glands. Detected in plasma cells in the lamia propria in colon mucosa.

The protein localises to the secreted. Functionally, acts in vitro to stimulate the secretion of adrenocorticotropic hormone (ACTH). Binds with high affinity to CRF receptor types 1, 2-alpha, and 2-beta. Plays a role in the establishment of normal hearing thresholds. Reduces food intake and regulates ghrelin levels in gastric body and plasma. The sequence is that of Urocortin (UCN) from Homo sapiens (Human).